Here is a 91-residue protein sequence, read N- to C-terminus: Small ribosomal subunit protein uS15 (91 aa).

The protein belongs to the universal ribosomal protein uS15 family. As to quaternary structure, part of the 30S ribosomal subunit. Forms a bridge to the 50S subunit in the 70S ribosome, contacting the 23S rRNA.

One of the primary rRNA binding proteins, it binds directly to 16S rRNA where it helps nucleate assembly of the platform of the 30S subunit by binding and bridging several RNA helices of the 16S rRNA. Its function is as follows. Forms an intersubunit bridge (bridge B4) with the 23S rRNA of the 50S subunit in the ribosome. The protein is Small ribosomal subunit protein uS15 of Legionella pneumophila (strain Corby).